The primary structure comprises 143 residues: S-protein homolog 11 (143 aa).

Residues 1 to 20 (MNCFSFSFIIIVLCAGSSNA) form the signal peptide.

This sequence belongs to the plant self-incompatibility (S1) protein family.

Its subcellular location is the secreted. The sequence is that of S-protein homolog 11 from Arabidopsis thaliana (Mouse-ear cress).